The chain runs to 350 residues: uncharacterized protein (350 aa).

The first 26 residues, 1-26 (MKKSGWLVVALIALVVLGVVTSIAVN), serve as a signal peptide directing secretion.

This is an uncharacterized protein from Archaeoglobus fulgidus (strain ATCC 49558 / DSM 4304 / JCM 9628 / NBRC 100126 / VC-16).